The following is a 798-amino-acid chain: Translation initiation factor IF-2 (798 aa).

The disordered stretch occupies residues 40-207 (SEQETKLRQA…QQESAKPAVP (168 aa)). Low complexity predominate over residues 57-186 (NTQSKATNNQ…RNNFNNQNRN (130 aa)). Residues 187–196 (RFNKKGKKGK) are compositionally biased toward basic residues. The tr-type G domain maps to 300-469 (TRPPVVTIMG…LLIAEVEDLK (170 aa)). Residues 309 to 316 (GHVDHGKT) are G1. 309–316 (GHVDHGKT) serves as a coordination point for GTP. The interval 334-338 (GITQH) is G2. The segment at 355–358 (DTPG) is G3. Residues 355 to 359 (DTPGH) and 409 to 412 (NKID) contribute to the GTP site. Residues 409-412 (NKID) form a G4 region. A G5 region spans residues 445–447 (SAK).

This sequence belongs to the TRAFAC class translation factor GTPase superfamily. Classic translation factor GTPase family. IF-2 subfamily.

The protein localises to the cytoplasm. One of the essential components for the initiation of protein synthesis. Protects formylmethionyl-tRNA from spontaneous hydrolysis and promotes its binding to the 30S ribosomal subunits. Also involved in the hydrolysis of GTP during the formation of the 70S ribosomal complex. The protein is Translation initiation factor IF-2 of Enterococcus faecalis (strain ATCC 700802 / V583).